A 311-amino-acid polypeptide reads, in one-letter code: Lipoyl synthase (311 aa).

The [4Fe-4S] cluster site is built by cysteine 47, cysteine 52, cysteine 58, cysteine 73, cysteine 77, cysteine 80, and serine 287. The Radical SAM core domain occupies 59-276 (WTKKHATVMI…AQIARAKGFL (218 aa)).

This sequence belongs to the radical SAM superfamily. Lipoyl synthase family. [4Fe-4S] cluster is required as a cofactor.

The protein localises to the cytoplasm. The enzyme catalyses [[Fe-S] cluster scaffold protein carrying a second [4Fe-4S](2+) cluster] + N(6)-octanoyl-L-lysyl-[protein] + 2 oxidized [2Fe-2S]-[ferredoxin] + 2 S-adenosyl-L-methionine + 4 H(+) = [[Fe-S] cluster scaffold protein] + N(6)-[(R)-dihydrolipoyl]-L-lysyl-[protein] + 4 Fe(3+) + 2 hydrogen sulfide + 2 5'-deoxyadenosine + 2 L-methionine + 2 reduced [2Fe-2S]-[ferredoxin]. It functions in the pathway protein modification; protein lipoylation via endogenous pathway; protein N(6)-(lipoyl)lysine from octanoyl-[acyl-carrier-protein]: step 2/2. Its function is as follows. Catalyzes the radical-mediated insertion of two sulfur atoms into the C-6 and C-8 positions of the octanoyl moiety bound to the lipoyl domains of lipoate-dependent enzymes, thereby converting the octanoylated domains into lipoylated derivatives. This chain is Lipoyl synthase, found in Sphingopyxis alaskensis (strain DSM 13593 / LMG 18877 / RB2256) (Sphingomonas alaskensis).